Consider the following 450-residue polypeptide: Serine--tRNA ligase, cytoplasmic (450 aa).

238-240 (TSE) contacts L-serine. Residues 271-273 (RRE) and Val-287 each bind ATP. L-serine is bound at residue Glu-294. ATP is bound at residue 358–361 (ELVS). Thr-396 contacts L-serine.

Belongs to the class-II aminoacyl-tRNA synthetase family. Type-1 seryl-tRNA synthetase subfamily. As to quaternary structure, homodimer. The tRNA molecule binds across the dimer.

The protein resides in the cytoplasm. The protein localises to the cytosol. It catalyses the reaction tRNA(Ser) + L-serine + ATP = L-seryl-tRNA(Ser) + AMP + diphosphate + H(+). Catalyzes the attachment of serine to tRNA(Ser) in a two-step reaction: serine is first activated by ATP to form Ser-AMP and then transferred to the acceptor end of tRNA(Ser). The sequence is that of Serine--tRNA ligase, cytoplasmic from Schizosaccharomyces pombe (strain 972 / ATCC 24843) (Fission yeast).